Reading from the N-terminus, the 289-residue chain is Pantothenate synthetase (289 aa).

Residue 30–37 participates in ATP binding; sequence MGYLHKGH. The active-site Proton donor is His37. (R)-pantoate is bound at residue Gln61. Gln61 lines the beta-alanine pocket. 147 to 150 serves as a coordination point for ATP; that stretch reads GEKD. Position 153 (Gln153) interacts with (R)-pantoate. ATP is bound by residues Val176 and 184–187; that span reads CSSR.

The protein belongs to the pantothenate synthetase family. In terms of assembly, homodimer.

Its subcellular location is the cytoplasm. The catalysed reaction is (R)-pantoate + beta-alanine + ATP = (R)-pantothenate + AMP + diphosphate + H(+). It participates in cofactor biosynthesis; (R)-pantothenate biosynthesis; (R)-pantothenate from (R)-pantoate and beta-alanine: step 1/1. Its function is as follows. Catalyzes the condensation of pantoate with beta-alanine in an ATP-dependent reaction via a pantoyl-adenylate intermediate. The protein is Pantothenate synthetase of Brucella anthropi (strain ATCC 49188 / DSM 6882 / CCUG 24695 / JCM 21032 / LMG 3331 / NBRC 15819 / NCTC 12168 / Alc 37) (Ochrobactrum anthropi).